The sequence spans 517 residues: Probable cytosol aminopeptidase (517 aa).

Mn(2+) is bound by residues Lys-279 and Asp-284. Lys-291 is an active-site residue. Asp-302, Asp-361, and Glu-363 together coordinate Mn(2+). Arg-365 is a catalytic residue.

The protein belongs to the peptidase M17 family. Mn(2+) is required as a cofactor.

It localises to the cytoplasm. The enzyme catalyses Release of an N-terminal amino acid, Xaa-|-Yaa-, in which Xaa is preferably Leu, but may be other amino acids including Pro although not Arg or Lys, and Yaa may be Pro. Amino acid amides and methyl esters are also readily hydrolyzed, but rates on arylamides are exceedingly low.. It catalyses the reaction Release of an N-terminal amino acid, preferentially leucine, but not glutamic or aspartic acids.. Functionally, presumably involved in the processing and regular turnover of intracellular proteins. Catalyzes the removal of unsubstituted N-terminal amino acids from various peptides. The protein is Probable cytosol aminopeptidase of Streptomyces coelicolor (strain ATCC BAA-471 / A3(2) / M145).